The following is a 58-amino-acid chain: Small ribosomal subunit protein bS21 (58 aa).

Belongs to the bacterial ribosomal protein bS21 family.

The sequence is that of Small ribosomal subunit protein bS21 from Lactobacillus johnsonii (strain CNCM I-12250 / La1 / NCC 533).